An 81-amino-acid polypeptide reads, in one-letter code: Large ribosomal subunit protein bL31B (81 aa).

Belongs to the bacterial ribosomal protein bL31 family. Type B subfamily. As to quaternary structure, part of the 50S ribosomal subunit.

This chain is Large ribosomal subunit protein bL31B, found in Borreliella burgdorferi (strain ZS7) (Borrelia burgdorferi).